A 621-amino-acid polypeptide reads, in one-letter code: Very-long-chain aldehyde decarbonylase GL1-5 (621 aa).

The next 5 helical transmembrane spans lie at 99–119 (IILSGILLYLGALYVPGGQHL), 126–146 (GAGLIALLHAGPVEFLYYWFH), 186–206 (LLFSIPLIACALTGTASIIAF), 224–244 (FELVPSWLFTWFPPLKYLMYT), and 332–352 (MWPLSWLSMVLTWTYGSSFTV). The Fatty acid hydroxylase domain occupies 138-272 (VEFLYYWFHR…MPFYDYIYNT (135 aa)).

Belongs to the sterol desaturase family. As to quaternary structure, homodimer. As to expression, expressed in panicles, developing spikelets, stamens and hulls and, at low levels, in roots, developing seeds, flag leaves and seedling shoots. Strongly expressed in the epidermal cells of anthers.

It localises to the endoplasmic reticulum membrane. The catalysed reaction is a long-chain fatty aldehyde + 2 NADPH + O2 + H(+) = a long-chain alkane + formate + 2 NADP(+) + H2O. Aldehyde decarbonylase involved in the conversion of aldehydes to alkanes. Core component of a very-long-chain alkane synthesis complex. Required for the biosynthesis of very-long-chain fatty acids (including polyesters) in cuticles, anther tapetum and pollen exine. The polypeptide is Very-long-chain aldehyde decarbonylase GL1-5 (Oryza sativa subsp. japonica (Rice)).